The following is a 534-amino-acid chain: Prolyl 4-hydroxylase subunit alpha-1 (534 aa).

Positions 1–17 (MIWVVLMMAILLPQSLA) are cleaved as a signal peptide. Residue N113 is glycosylated (N-linked (GlcNAc...) asparagine). Residues 205–238 (VSVLDYLSYAVYQQGDLDKALLLTKKLLELDPEH) form a TPR repeat. N259 carries N-linked (GlcNAc...) asparagine glycosylation. A Fe2OG dioxygenase domain is found at 411–519 (TAEELQVANY…KWVSNKWLHE (109 aa)). Residues H429, D431, and H500 each coordinate Fe cation. Residue K510 participates in 2-oxoglutarate binding.

This sequence belongs to the P4HA family. In terms of assembly, heterotetramer of two alpha-1 chains and two beta chains (P4HB)(the beta chain is the multi-functional PDI), where P4HB plays the role of a structural subunit; this tetramer catalyzes the formation of 4-hydroxyproline in collagen. The cofactor is Fe(2+). Requires L-ascorbate as cofactor. Expressed at least in brain, heart and lung.

Its subcellular location is the endoplasmic reticulum lumen. The enzyme catalyses L-prolyl-[collagen] + 2-oxoglutarate + O2 = trans-4-hydroxy-L-prolyl-[collagen] + succinate + CO2. Its activity is regulated as follows. Inhibited by poly(L-proline). Its function is as follows. Catalyzes the post-translational formation of 4-hydroxyproline in -Xaa-Pro-Gly- sequences in collagens and other proteins. This is Prolyl 4-hydroxylase subunit alpha-1 (P4ha1) from Mus musculus (Mouse).